We begin with the raw amino-acid sequence, 93 residues long: Histone H2B (93 aa).

The segment covering 1-12 has biased composition (low complexity); the sequence is MPEPAKSAPAPK. The interval 1–31 is disordered; that stretch reads MPEPAKSAPAPKKGSKKAVTKTQKKGDKKRX. Lysine 6 and lysine 13 each carry N6-acetyllysine. The span at 13–28 shows a compositional bias: basic residues; that stretch reads KGSKKAVTKTQKKGDK. Serine 15 bears the Phosphoserine mark. Residues lysine 16 and lysine 21 each carry the N6-acetyllysine modification.

The protein belongs to the histone H2B family. As to quaternary structure, the nucleosome is a histone octamer containing two molecules each of H2A, H2B, H3 and H4 assembled in one H3-H4 heterotetramer and two H2A-H2B heterodimers. The octamer wraps approximately 147 bp of DNA. Monoubiquitination at the C-terminal Lys gives a specific tag for epigenetic transcriptional activation and is also prerequisite for histone H3 'Lys-4' and 'Lys-79' methylation. In terms of processing, phosphorylated on Ser-15 during apoptosis; which facilitates apoptotic chromatin condensation.

Its subcellular location is the nucleus. It localises to the chromosome. Functionally, core component of nucleosome. Nucleosomes wrap and compact DNA into chromatin, limiting DNA accessibility to the cellular machineries which require DNA as a template. Histones thereby play a central role in transcription regulation, DNA repair, DNA replication and chromosomal stability. DNA accessibility is regulated via a complex set of post-translational modifications of histones, also called histone code, and nucleosome remodeling. The sequence is that of Histone H2B from Crocodylus niloticus (Nile crocodile).